We begin with the raw amino-acid sequence, 218 residues long: ATP phosphoribosyltransferase (218 aa).

Belongs to the ATP phosphoribosyltransferase family. Short subfamily. Heteromultimer composed of HisG and HisZ subunits.

Its subcellular location is the cytoplasm. The enzyme catalyses 1-(5-phospho-beta-D-ribosyl)-ATP + diphosphate = 5-phospho-alpha-D-ribose 1-diphosphate + ATP. It functions in the pathway amino-acid biosynthesis; L-histidine biosynthesis; L-histidine from 5-phospho-alpha-D-ribose 1-diphosphate: step 1/9. Its function is as follows. Catalyzes the condensation of ATP and 5-phosphoribose 1-diphosphate to form N'-(5'-phosphoribosyl)-ATP (PR-ATP). Has a crucial role in the pathway because the rate of histidine biosynthesis seems to be controlled primarily by regulation of HisG enzymatic activity. This Trichormus variabilis (strain ATCC 29413 / PCC 7937) (Anabaena variabilis) protein is ATP phosphoribosyltransferase.